A 315-amino-acid chain; its full sequence is Holliday junction branch migration complex subunit RuvB (315 aa).

Residues 1–168 (MAKKQEIRPK…FGLIGQISNY (168 aa)) are large ATPase domain (RuvB-L). ATP-binding positions include I7, R8, G49, K52, T53, S54, 115-117 (EDF), R158, Y168, and R205. T53 contacts Mg(2+). Positions 169–239 (QVEDIEKIIK…LVNKTLKQLG (71 aa)) are small ATPAse domain (RuvB-S). The segment at 242-315 (ENGLNESQVK…QKGISYLERI (74 aa)) is head domain (RuvB-H). Residues K297 and R302 each coordinate DNA.

This sequence belongs to the RuvB family. As to quaternary structure, homohexamer. Forms an RuvA(8)-RuvB(12)-Holliday junction (HJ) complex. HJ DNA is sandwiched between 2 RuvA tetramers; dsDNA enters through RuvA and exits via RuvB. An RuvB hexamer assembles on each DNA strand where it exits the tetramer. Each RuvB hexamer is contacted by two RuvA subunits (via domain III) on 2 adjacent RuvB subunits; this complex drives branch migration. In the full resolvosome a probable DNA-RuvA(4)-RuvB(12)-RuvC(2) complex forms which resolves the HJ.

Its subcellular location is the cytoplasm. It catalyses the reaction ATP + H2O = ADP + phosphate + H(+). The RuvA-RuvB-RuvC complex processes Holliday junction (HJ) DNA during genetic recombination and DNA repair, while the RuvA-RuvB complex plays an important role in the rescue of blocked DNA replication forks via replication fork reversal (RFR). RuvA specifically binds to HJ cruciform DNA, conferring on it an open structure. The RuvB hexamer acts as an ATP-dependent pump, pulling dsDNA into and through the RuvAB complex. RuvB forms 2 homohexamers on either side of HJ DNA bound by 1 or 2 RuvA tetramers; 4 subunits per hexamer contact DNA at a time. Coordinated motions by a converter formed by DNA-disengaged RuvB subunits stimulates ATP hydrolysis and nucleotide exchange. Immobilization of the converter enables RuvB to convert the ATP-contained energy into a lever motion, pulling 2 nucleotides of DNA out of the RuvA tetramer per ATP hydrolyzed, thus driving DNA branch migration. The RuvB motors rotate together with the DNA substrate, which together with the progressing nucleotide cycle form the mechanistic basis for DNA recombination by continuous HJ branch migration. Branch migration allows RuvC to scan DNA until it finds its consensus sequence, where it cleaves and resolves cruciform DNA. The polypeptide is Holliday junction branch migration complex subunit RuvB (Mycoplasmopsis pulmonis (strain UAB CTIP) (Mycoplasma pulmonis)).